The primary structure comprises 728 residues: 1,4-alpha-glucan branching enzyme GlgB (728 aa).

Asp-405 serves as the catalytic Nucleophile. Glu-458 functions as the Proton donor in the catalytic mechanism.

The protein belongs to the glycosyl hydrolase 13 family. GlgB subfamily. As to quaternary structure, monomer.

The enzyme catalyses Transfers a segment of a (1-&gt;4)-alpha-D-glucan chain to a primary hydroxy group in a similar glucan chain.. It functions in the pathway glycan biosynthesis; glycogen biosynthesis. Functionally, catalyzes the formation of the alpha-1,6-glucosidic linkages in glycogen by scission of a 1,4-alpha-linked oligosaccharide from growing alpha-1,4-glucan chains and the subsequent attachment of the oligosaccharide to the alpha-1,6 position. This Serratia proteamaculans (strain 568) protein is 1,4-alpha-glucan branching enzyme GlgB.